Reading from the N-terminus, the 1091-residue chain is ATP-citrate synthase (1091 aa).

The 262-residue stretch at Lys4–Lys265 folds into the ATP-grasp domain. Residues Lys58, Arg66, Gly67, Pro109, Val111, and Glu118 each contribute to the ATP site. Tyr131 is modified (phosphotyrosine). Asp216 lines the ATP pocket. Residues Asp257, Ser260, and Ala262 each coordinate Mg(2+). Ser263 carries the phosphoserine modification. 5 residues coordinate citrate: Gly309, Asn346, Thr348, Tyr364, and Arg379. Over residues Ser442–Ser457 the composition is skewed to low complexity. The disordered stretch occupies residues Ser442 to Lys478. Thr447 is modified (phosphothreonine). Ser451 is subject to Phosphoserine. The residue at position 455 (Ser455) is a Phosphoserine; by PKA and PKB/AKT1 or PKB/AKT2 or BCKDK. Ser459 carries the post-translational modification Phosphoserine. N6-acetyllysine; alternate is present on residues Lys530, Lys536, and Lys544. Glycyl lysine isopeptide (Lys-Gly) (interchain with G-Cter in ubiquitin); alternate cross-links involve residues Lys530, Lys536, and Lys544. Thr629 carries the phosphothreonine modification. At Ser653 the chain carries Phosphoserine. Tyr672 carries the post-translational modification Phosphotyrosine. His750 functions as the Tele-phosphohistidine intermediate in the catalytic mechanism. Leu769–Ser779 serves as a coordination point for CoA. Phosphoserine is present on Ser829. N6-acetyllysine occurs at positions 938, 958, 968, and 1067. Position 1090 is a phosphoserine (Ser1090).

In the N-terminal section; belongs to the succinate/malate CoA ligase beta subunit family. It in the C-terminal section; belongs to the succinate/malate CoA ligase alpha subunit family. As to quaternary structure, homotetramer. Mg(2+) serves as cofactor. Phosphorylated by PKA and GSK3 in a sequential manner; phosphorylation results in activation of its activity. Phosphorylation on Thr-447 and Ser-451 depends on the phosphorylation state of Ser-455. Phosphorylation on Ser-455 is decreased by prior phosphorylation on the other 2 residues. Phosphorylated at Ser-455 by BCKDK and dephosphorylated by protein phosphatase PPM1K. In terms of processing, ISGylated. Post-translationally, acetylated at Lys-530, Lys-536 and Lys-544 by KAT2B/PCAF. Acetylation is promoted by glucose and stabilizes the protein, probably by preventing ubiquitination at the same sites. Acetylation promotes de novo lipid synthesis. Deacetylated by SIRT2. Ubiquitinated at Lys-530, Lys-536 and Lys-544 by the BCR(KLHL25) E3 ubiquitin ligase complex and UBR4, leading to its degradation. Ubiquitination is probably inhibited by acetylation at same site. BCR(KLHL25)-mediated degradation of ACLY promotes fatty acid oxidation and is required for differentiation of inducible regulatory T (iTreg) cells.

It localises to the cytoplasm. The protein resides in the cytosol. The catalysed reaction is oxaloacetate + acetyl-CoA + ADP + phosphate = citrate + ATP + CoA. Its activity is regulated as follows. Phosphorylation results in activation of its activity. Glucose 6-phosphate, fructose 6-phosphate, fructose 2,6-bisphosphate, ribulose 5-phosphate, and fructose 1,6-bisphosphate also act as activators. Its function is as follows. Catalyzes the cleavage of citrate into oxaloacetate and acetyl-CoA, the latter serving as common substrate in multiple biochemical reactions in protein, carbohydrate and lipid metabolism. This is ATP-citrate synthase (Acly) from Mus musculus (Mouse).